The primary structure comprises 395 residues: MTYNLHPAILVLKDGKFYRGWTLINSIISFGEVVFNTGMTGYQEIMTDPSYAEQIITFTYPEIGNTGINHEDNESNKIHVKGIITKNICFSPNNWRQQESFINYIFNNQIPHIFGIDTRALTKHLRKTGSMNGCISSQYLNPYLLSTKFKDRLSIESSDLVKQVTTSKNYEFQGYSHKHFSYLQYKTDKMYGYGLKIILIDFGVKYNILSRLDNYGCSIQILPATSSYETINAYNPDGIILSNGPGDPSIITYAIKTVKKIIKYTNIPIFGICMGHQIISLALEGTTFKLKFGHRGLNHPAGMKQKAEVTSQNHGFAVNQESLYKDTINITHFNLNDTTVAGILHNKKPIFSVQYHPEASPGPHDSDYLFKYFINLIKHFKQYKNYKNSSLAQAR.

The segment at 1–192 (MTYNLHPAIL…LQYKTDKMYG (192 aa)) is CPSase. Ser-50, Gly-244, and Gly-246 together coordinate L-glutamine. The Glutamine amidotransferase type-1 domain maps to 196 to 383 (KIILIDFGVK…INLIKHFKQY (188 aa)). Cys-273 functions as the Nucleophile in the catalytic mechanism. 5 residues coordinate L-glutamine: Met-274, Gln-277, Asn-313, Gly-315, and Phe-316. Residues His-356 and Glu-358 contribute to the active site.

The protein belongs to the CarA family. In terms of assembly, composed of two chains; the small (or glutamine) chain promotes the hydrolysis of glutamine to ammonia, which is used by the large (or ammonia) chain to synthesize carbamoyl phosphate. Tetramer of heterodimers (alpha,beta)4.

The protein localises to the plastid. It is found in the chloroplast. It carries out the reaction hydrogencarbonate + L-glutamine + 2 ATP + H2O = carbamoyl phosphate + L-glutamate + 2 ADP + phosphate + 2 H(+). The enzyme catalyses L-glutamine + H2O = L-glutamate + NH4(+). Its pathway is amino-acid biosynthesis; L-arginine biosynthesis; carbamoyl phosphate from bicarbonate: step 1/1. It participates in pyrimidine metabolism; UMP biosynthesis via de novo pathway; (S)-dihydroorotate from bicarbonate: step 1/3. In terms of biological role, small subunit of the glutamine-dependent carbamoyl phosphate synthetase (CPSase). CPSase catalyzes the formation of carbamoyl phosphate from the ammonia moiety of glutamine, carbonate, and phosphate donated by ATP, constituting the first step of 2 biosynthetic pathways, one leading to arginine and/or urea and the other to pyrimidine nucleotides. The small subunit (glutamine amidotransferase) binds and cleaves glutamine to supply the large subunit with the substrate ammonia. The sequence is that of Carbamoyl phosphate synthase small chain from Gracilaria tenuistipitata var. liui (Red alga).